The sequence spans 303 residues: Methyltransferase ktnA (303 aa).

Belongs to the class I-like SAM-binding methyltransferase superfamily. Requires S-adenosyl-L-methionine as cofactor.

Its function is as follows. Non-reducing polyketide synthase; part of the gene cluster that mediates the biosynthesis of the bicoumarin kotanin. The non-reducing polyketide synthase ktnS first catalyzes the formation of the pentaketidic 4,7-dihydroxy-5-methylcoumarin from acetyl coenzyme A and 4 malonyl coenzyme A molecules. Further O-methylation by ktnB leads to the formation of 7-demethylsiderin. Then, an oxidative phenol coupling catalyzed by the cytochrome P450 monooxygenase ktnC forms the 8,8'-dimer P-orlandin via dimerization the monomeric precursor, 7-demethylsiderin. P-orlandin is subsequently O-methylated in a stepwise fashion to demethylkotanin and kotanin. The function of ktnA within the pathway has not been determined yet. In Aspergillus niger (strain ATCC MYA-4892 / CBS 513.88 / FGSC A1513), this protein is Methyltransferase ktnA.